The sequence spans 170 residues: MHYNTSLLCDIYADTVDVVEPLLTNFGGRNSFAGEVVTIKCFESVGLIYKALEENGLGKVLLVDGGGSLRRALVNAHIAELAVENGWEGIVVNGCVREVDLLEDLDIGIQAITAIPVGAEDTQIGEVNSPVNFAGVTFLPEDILYADSTGIIISPEPLNAEALTESDEIA.

The protein belongs to the RraA family. As to quaternary structure, homotrimer. Binds to both RNA-binding sites in the C-terminal region of Rne and to RhlB.

It localises to the cytoplasm. In terms of biological role, globally modulates RNA abundance by binding to RNase E (Rne) and regulating its endonucleolytic activity. Can modulate Rne action in a substrate-dependent manner by altering the composition of the degradosome. Modulates RNA-binding and helicase activities of the degradosome. The chain is Regulator of ribonuclease activity A from Psychromonas ingrahamii (strain DSM 17664 / CCUG 51855 / 37).